Here is a 181-residue protein sequence, read N- to C-terminus: Secreted chorismate mutase (181 aa).

A signal peptide spans 1–20 (MLASVALAALAGVGTPHATA). Residues 21 to 100 (DDASPLVPLV…ATSSVEHTRF (80 aa)) form the Chorismate mutase domain. Substrate contacts are provided by residues Arg-36, Lys-47, Asp-56, 59–63 (REQQV), 92–96 (TSSVE), and Arg-121. Cys-147 and Cys-180 are oxidised to a cystine.

Homodimer.

The protein resides in the secreted. It catalyses the reaction chorismate = prephenate. Its pathway is metabolic intermediate biosynthesis; prephenate biosynthesis; prephenate from chorismate: step 1/1. In terms of biological role, catalyzes the Claisen rearrangement of chorismate to prephenate. May play some role in the pathogenicity. This chain is Secreted chorismate mutase, found in Mycolicibacterium smegmatis (strain ATCC 700084 / mc(2)155) (Mycobacterium smegmatis).